The primary structure comprises 277 residues: Bis(5'-nucleosyl)-tetraphosphatase, symmetrical (277 aa).

It belongs to the Ap4A hydrolase family.

The catalysed reaction is P(1),P(4)-bis(5'-adenosyl) tetraphosphate + H2O = 2 ADP + 2 H(+). Hydrolyzes diadenosine 5',5'''-P1,P4-tetraphosphate to yield ADP. The polypeptide is Bis(5'-nucleosyl)-tetraphosphatase, symmetrical (Bordetella bronchiseptica (strain ATCC BAA-588 / NCTC 13252 / RB50) (Alcaligenes bronchisepticus)).